The chain runs to 586 residues: DNA-binding protein RFX8 (586 aa).

Residues 22–97 constitute a DNA-binding region (RFX-type winged-helix); it reads VIQWLVDNFC…YHYDGICIKK (76 aa).

The protein belongs to the RFX family.

The protein localises to the nucleus. May be a transcription factor. In Homo sapiens (Human), this protein is DNA-binding protein RFX8 (RFX8).